Reading from the N-terminus, the 190-residue chain is Class III hydrophobin F (190 aa).

The signal sequence occupies residues methionine 1–alanine 18. Intrachain disulfides connect cysteine 54-cysteine 115, cysteine 62-cysteine 109, cysteine 63-cysteine 97, and cysteine 116-cysteine 131.

The protein belongs to the fungal hydrophobin family. Self-assembles to form functional amyloid fibrils called rodlets. Self-assembly into fibrillar rodlets occurs spontaneously at hydrophobic:hydrophilic interfaces and the rodlets further associate laterally to form amphipathic monolayers.

It localises to the secreted. Its subcellular location is the cell wall. In terms of biological role, aerial growth, conidiation, and dispersal of filamentous fungi in the environment rely upon a capability of their secreting small amphipathic proteins called hydrophobins (HPBs) with low sequence identity. Class I can self-assemble into an outermost layer of rodlet bundles on aerial cell surfaces, conferring cellular hydrophobicity that supports fungal growth, development and dispersal; whereas Class II form highly ordered films at water-air interfaces through intermolecular interactions but contribute nothing to the rodlet structure. RodF and rodG belong to Class III, which contains hydrophobins with intermediate (between classes I and II) or atypical characteristics. RodF, unlike rodA, is not required for rodlet formation. The polypeptide is Class III hydrophobin F (Aspergillus fumigatus (strain ATCC MYA-4609 / CBS 101355 / FGSC A1100 / Af293) (Neosartorya fumigata)).